The sequence spans 116 residues: Probable prefoldin subunit 2 (116 aa).

The protein belongs to the prefoldin subunit beta family. In terms of assembly, heterohexamer of two PFD-alpha type and four PFD-beta type subunits.

Binds specifically to cytosolic chaperonin (c-CPN) and transfers target proteins to it. Binds to nascent polypeptide chain and promotes folding in an environment in which there are many competing pathways for nonnative proteins. The protein is Probable prefoldin subunit 2 (pfdn2) of Dictyostelium discoideum (Social amoeba).